Consider the following 117-residue polypeptide: Immunoglobulin heavy variable 3-11 (117 aa).

Residues 1–19 form the signal peptide; the sequence is MEFGLSWVFLVAIIKGVQC. The residue at position 20 (Q20) is a Pyrrolidone carboxylic acid. Positions 20-44 are framework-1; it reads QVQLVESGGGLVKPGGSLRLSCAAS. Residues 20-117 form the Ig-like domain; sequence QVQLVESGGG…EDTAVYYCAR (98 aa). A disulfide bridge links C41 with C115. The complementarity-determining-1 stretch occupies residues 45-52; sequence GFTFSDYY. The tract at residues 53–69 is framework-2; the sequence is MSWIRQAPGKGLEWVSY. The complementarity-determining-2 stretch occupies residues 70 to 77; that stretch reads ISSSSSYT. Residues 78–115 form a framework-3 region; that stretch reads NYADSVKGRFTISRDNAKNSLYLQMNSLRAEDTAVYYC. Residues 116–117 are complementarity-determining-3; sequence AR.

In terms of assembly, immunoglobulins are composed of two identical heavy chains and two identical light chains; disulfide-linked.

It localises to the secreted. The protein resides in the cell membrane. In terms of biological role, v region of the variable domain of immunoglobulin heavy chains that participates in the antigen recognition. Immunoglobulins, also known as antibodies, are membrane-bound or secreted glycoproteins produced by B lymphocytes. In the recognition phase of humoral immunity, the membrane-bound immunoglobulins serve as receptors which, upon binding of a specific antigen, trigger the clonal expansion and differentiation of B lymphocytes into immunoglobulins-secreting plasma cells. Secreted immunoglobulins mediate the effector phase of humoral immunity, which results in the elimination of bound antigens. The antigen binding site is formed by the variable domain of one heavy chain, together with that of its associated light chain. Thus, each immunoglobulin has two antigen binding sites with remarkable affinity for a particular antigen. The variable domains are assembled by a process called V-(D)-J rearrangement and can then be subjected to somatic hypermutations which, after exposure to antigen and selection, allow affinity maturation for a particular antigen. The chain is Immunoglobulin heavy variable 3-11 from Homo sapiens (Human).